The sequence spans 161 residues: Large ribosomal subunit protein uL15 (161 aa).

A disordered region spans residues 1–43 (MKLSEISDNPGARKKRMRIGRGIGSGKGKTGGRGGKGQTARSG). A compositionally biased stretch (gly residues) spans 21–37 (RGIGSGKGKTGGRGGKG).

This sequence belongs to the universal ribosomal protein uL15 family. Part of the 50S ribosomal subunit.

Binds to the 23S rRNA. The sequence is that of Large ribosomal subunit protein uL15 from Rhodopseudomonas palustris (strain BisB5).